Consider the following 424-residue polypeptide: Serine hydroxymethyltransferase (424 aa).

(6S)-5,6,7,8-tetrahydrofolate contacts are provided by residues Leu-119 and 123–125; that span reads GHL. An N6-(pyridoxal phosphate)lysine modification is found at Lys-228. 353-355 contacts (6S)-5,6,7,8-tetrahydrofolate; the sequence is SAF.

Belongs to the SHMT family. As to quaternary structure, homodimer. Pyridoxal 5'-phosphate serves as cofactor.

It localises to the cytoplasm. It carries out the reaction (6R)-5,10-methylene-5,6,7,8-tetrahydrofolate + glycine + H2O = (6S)-5,6,7,8-tetrahydrofolate + L-serine. It functions in the pathway one-carbon metabolism; tetrahydrofolate interconversion. The protein operates within amino-acid biosynthesis; glycine biosynthesis; glycine from L-serine: step 1/1. Functionally, catalyzes the reversible interconversion of serine and glycine with tetrahydrofolate (THF) serving as the one-carbon carrier. Also exhibits THF-independent aldolase activity toward beta-hydroxyamino acids, producing glycine and aldehydes, via a retro-aldol mechanism. This Natronomonas pharaonis (strain ATCC 35678 / DSM 2160 / CIP 103997 / JCM 8858 / NBRC 14720 / NCIMB 2260 / Gabara) (Halobacterium pharaonis) protein is Serine hydroxymethyltransferase.